The sequence spans 486 residues: UDP-N-acetylmuramoyl-L-alanyl-D-glutamate--2,6-diaminopimelate ligase (486 aa).

Serine 34 lines the UDP-N-acetyl-alpha-D-muramoyl-L-alanyl-D-glutamate pocket. Residue 112–118 (GTAGKTS) participates in ATP binding. UDP-N-acetyl-alpha-D-muramoyl-L-alanyl-D-glutamate contacts are provided by residues 154 to 155 (TT), serine 181, glutamine 187, and arginine 189. An N6-carboxylysine modification is found at lysine 221. Meso-2,6-diaminopimelate contacts are provided by residues arginine 385, 409 to 412 (DNPR), glycine 457, and glutamate 461. Positions 409–412 (DNPR) match the Meso-diaminopimelate recognition motif motif.

This sequence belongs to the MurCDEF family. MurE subfamily. Mg(2+) serves as cofactor. In terms of processing, carboxylation is probably crucial for Mg(2+) binding and, consequently, for the gamma-phosphate positioning of ATP.

Its subcellular location is the cytoplasm. The catalysed reaction is UDP-N-acetyl-alpha-D-muramoyl-L-alanyl-D-glutamate + meso-2,6-diaminopimelate + ATP = UDP-N-acetyl-alpha-D-muramoyl-L-alanyl-gamma-D-glutamyl-meso-2,6-diaminopimelate + ADP + phosphate + H(+). The protein operates within cell wall biogenesis; peptidoglycan biosynthesis. Its function is as follows. Catalyzes the addition of meso-diaminopimelic acid to the nucleotide precursor UDP-N-acetylmuramoyl-L-alanyl-D-glutamate (UMAG) in the biosynthesis of bacterial cell-wall peptidoglycan. The protein is UDP-N-acetylmuramoyl-L-alanyl-D-glutamate--2,6-diaminopimelate ligase of Rhizobium meliloti (strain 1021) (Ensifer meliloti).